The chain runs to 160 residues: Large ribosomal subunit protein uL15 (160 aa).

Positions 1 to 13 (MKLNELRDNEGAA) are enriched in basic and acidic residues. The tract at residues 1-51 (MKLNELRDNEGAARKKKRVARGPGSGKGKTAGRGIKGQKSRSGVALNGYEG) is disordered. Residues 23-35 (PGSGKGKTAGRGI) are compositionally biased toward gly residues.

The protein belongs to the universal ribosomal protein uL15 family. As to quaternary structure, part of the 50S ribosomal subunit.

Functionally, binds to the 23S rRNA. In Cereibacter sphaeroides (strain ATCC 17025 / ATH 2.4.3) (Rhodobacter sphaeroides), this protein is Large ribosomal subunit protein uL15.